A 378-amino-acid polypeptide reads, in one-letter code: Cell death-related nuclease 6 (378 aa).

The N-terminal stretch at methionine 1 to alanine 17 is a signal peptide. Residues asparagine 51, asparagine 92, and asparagine 111 are each glycosylated (N-linked (GlcNAc...) asparagine).

This sequence belongs to the DNase II family.

Functionally, involved in apoptotic DNA degradation. The protein is Cell death-related nuclease 6 (crn-6) of Caenorhabditis elegans.